A 306-amino-acid chain; its full sequence is Homeobox protein Hox-C13a (306 aa).

Positions 68-90 (SVYSDISSPDTGRQCPAPQTSSS) are disordered. Positions 236-295 (GRKKRVPYTKLQLKELEKEYAASKFITKDKRRRISAATNLSERQVTIWFQNRRVKEKKFI) form a DNA-binding region, homeobox.

Belongs to the Abd-B homeobox family.

The protein resides in the nucleus. In terms of biological role, sequence-specific transcription factor which is part of a developmental regulatory system that provides cells with specific positional identities on the anterior-posterior axis. The sequence is that of Homeobox protein Hox-C13a (hoxc13a) from Takifugu rubripes (Japanese pufferfish).